We begin with the raw amino-acid sequence, 162 residues long: Lipoprotein signal peptidase (162 aa).

The next 3 helical transmembrane spans lie at 12–32 (WLWL…LILQ), 70–90 (WFFA…MYRS), and 102–122 (ALII…GFVV). Residues D123 and D141 contribute to the active site. A helical transmembrane segment spans residues 137 to 157 (FNLADSAICIGAALIVLEGFL).

The protein belongs to the peptidase A8 family.

It localises to the cell inner membrane. It carries out the reaction Release of signal peptides from bacterial membrane prolipoproteins. Hydrolyzes -Xaa-Yaa-Zaa-|-(S,diacylglyceryl)Cys-, in which Xaa is hydrophobic (preferably Leu), and Yaa (Ala or Ser) and Zaa (Gly or Ala) have small, neutral side chains.. It participates in protein modification; lipoprotein biosynthesis (signal peptide cleavage). Its function is as follows. This protein specifically catalyzes the removal of signal peptides from prolipoproteins. This chain is Lipoprotein signal peptidase, found in Citrobacter koseri (strain ATCC BAA-895 / CDC 4225-83 / SGSC4696).